The chain runs to 1143 residues: DNA polymerase II large subunit (1143 aa).

It belongs to the archaeal DNA polymerase II family. Heterodimer of a large subunit and a small subunit.

The enzyme catalyses DNA(n) + a 2'-deoxyribonucleoside 5'-triphosphate = DNA(n+1) + diphosphate. It carries out the reaction Exonucleolytic cleavage in the 3'- to 5'-direction to yield nucleoside 5'-phosphates.. Its function is as follows. Possesses two activities: a DNA synthesis (polymerase) and an exonucleolytic activity that degrades single-stranded DNA in the 3'- to 5'-direction. Has a template-primer preference which is characteristic of a replicative DNA polymerase. In Archaeoglobus fulgidus (strain ATCC 49558 / DSM 4304 / JCM 9628 / NBRC 100126 / VC-16), this protein is DNA polymerase II large subunit (polC).